A 311-amino-acid polypeptide reads, in one-letter code: ATP synthase subunit a (311 aa).

6 consecutive transmembrane segments (helical) span residues Ala62–Met82, Val123–Ile143, Val179–Ile199, Phe213–Ile233, Ile253–Ile273, and Phe276–Leu296.

Belongs to the ATPase A chain family. As to quaternary structure, F-type ATPases have 2 components, CF(1) - the catalytic core - and CF(0) - the membrane proton channel. CF(1) has five subunits: alpha(3), beta(3), gamma(1), delta(1), epsilon(1). CF(0) has three main subunits: a(1), b(2) and c(9-12). The alpha and beta chains form an alternating ring which encloses part of the gamma chain. CF(1) is attached to CF(0) by a central stalk formed by the gamma and epsilon chains, while a peripheral stalk is formed by the delta and b chains.

It is found in the cell inner membrane. Functionally, key component of the proton channel; it plays a direct role in the translocation of protons across the membrane. In Teredinibacter turnerae (strain ATCC 39867 / T7901), this protein is ATP synthase subunit a.